Consider the following 304-residue polypeptide: UDP-N-acetylenolpyruvoylglucosamine reductase (304 aa).

The FAD-binding PCMH-type domain occupies 33 to 198 (RVGGPADILV…IEATIELESG (166 aa)). Residue arginine 177 is part of the active site. Residue serine 227 is the Proton donor of the active site. Glutamate 297 is a catalytic residue.

Belongs to the MurB family. FAD serves as cofactor.

Its subcellular location is the cytoplasm. It catalyses the reaction UDP-N-acetyl-alpha-D-muramate + NADP(+) = UDP-N-acetyl-3-O-(1-carboxyvinyl)-alpha-D-glucosamine + NADPH + H(+). It functions in the pathway cell wall biogenesis; peptidoglycan biosynthesis. Its function is as follows. Cell wall formation. This is UDP-N-acetylenolpyruvoylglucosamine reductase from Clostridium perfringens (strain SM101 / Type A).